Consider the following 192-residue polypeptide: Der GTPase-activating protein YihI (192 aa).

Residues 1–80 (MSRTKKTRRI…KAAVKEVKDP (80 aa)) are disordered. Basic and acidic residues-rich tracts occupy residues 9–25 (RITD…KPEQ), 37–48 (TRYELDAKAREE), and 65–80 (DPAE…VKDP).

This sequence belongs to the YihI family. In terms of assembly, interacts with Der.

A GTPase-activating protein (GAP) that modifies Der/EngA GTPase function. May play a role in ribosome biogenesis. This Actinobacillus pleuropneumoniae serotype 7 (strain AP76) protein is Der GTPase-activating protein YihI.